The following is a 364-amino-acid chain: uncharacterized protein (364 aa).

This is an uncharacterized protein from Escherichia coli (strain K12).